The following is a 317-amino-acid chain: Transaldolase (317 aa).

Lysine 126 functions as the Schiff-base intermediate with substrate in the catalytic mechanism.

The protein belongs to the transaldolase family. Type 1 subfamily. In terms of assembly, homodimer.

It localises to the cytoplasm. The catalysed reaction is D-sedoheptulose 7-phosphate + D-glyceraldehyde 3-phosphate = D-erythrose 4-phosphate + beta-D-fructose 6-phosphate. Its pathway is carbohydrate degradation; pentose phosphate pathway; D-glyceraldehyde 3-phosphate and beta-D-fructose 6-phosphate from D-ribose 5-phosphate and D-xylulose 5-phosphate (non-oxidative stage): step 2/3. Functionally, transaldolase is important for the balance of metabolites in the pentose-phosphate pathway. This is Transaldolase from Burkholderia pseudomallei (strain 1710b).